Consider the following 149-residue polypeptide: FAD synthase (149 aa).

Residues 10–11 (TF), 15–18 (HPGH), Asp-95, and Tyr-123 each bind ATP.

It belongs to the archaeal FAD synthase family. Homodimer. Requires Co(2+) as cofactor.

It catalyses the reaction FMN + ATP + H(+) = FAD + diphosphate. It functions in the pathway cofactor biosynthesis; FAD biosynthesis; FAD from FMN: step 1/1. Is inhibited by the product PPi. In terms of biological role, catalyzes the transfer of the AMP portion of ATP to flavin mononucleotide (FMN) to produce flavin adenine dinucleotide (FAD) coenzyme. To a lesser extent, is also able to utilize other nucleotides such as CTP and GTP as substrates, producing the modified coenzymes, flavin cytosine dinucleotide (FCD) and flavin guanine dinucleotide (FGD), respectively. Does not catalyze the reverse reaction to produce FMN and ATP from FAD and PPi. Does not function as a glycerol-3-phosphate cytidylyltransferase, as previously annotated in the complete genome. In Methanocaldococcus jannaschii (strain ATCC 43067 / DSM 2661 / JAL-1 / JCM 10045 / NBRC 100440) (Methanococcus jannaschii), this protein is FAD synthase (ribL).